The following is a 474-amino-acid chain: 6-phospho-beta-galactosidase (474 aa).

Residues glutamine 19, histidine 116, asparagine 159, glutamate 160, and asparagine 297 each coordinate D-galactose 6-phosphate. The active-site Proton donor is glutamate 160. The active-site Nucleophile is glutamate 375. D-galactose 6-phosphate-binding residues include serine 433, tryptophan 434, lysine 440, and tyrosine 442.

The protein belongs to the glycosyl hydrolase 1 family.

The enzyme catalyses a 6-phospho-beta-D-galactoside + H2O = D-galactose 6-phosphate + an alcohol. It participates in carbohydrate metabolism; lactose degradation; D-galactose 6-phosphate and beta-D-glucose from lactose 6-phosphate: step 1/1. The sequence is that of 6-phospho-beta-galactosidase from Lacticaseibacillus rhamnosus (Lactobacillus rhamnosus).